The chain runs to 467 residues: Acyl-lipid (8-3)-desaturase B (467 aa).

The Cytochrome b5 heme-binding domain maps to 12–89; the sequence is LKLYTWDEVS…IKQYEIGYIS (78 aa). 2 residues coordinate heme: histidine 47 and histidine 70. 2 consecutive transmembrane segments (helical) span residues 123–143 and 152–172; these read VSVGVFTRMVLIYLFLFVTYY and FWLNCIFAVLYGVANSLFGLH. Residues 175-179 carry the Histidine box-1 motif; it reads HDACH. The helical transmembrane segment at 187-207 threads the bilayer; the sequence is MTWKILGATFDLFAGASFYAW. Positions 211-216 match the Histidine box-2 motif; sequence HVIGHH. 2 consecutive transmembrane segments (helical) span residues 293 to 313 and 317 to 337; these read AIFILGKLVFIISRFILPLIY and FSHLICFFLISELVLGWYLAI. Residues 400-404 carry the Histidine box-3 motif; that stretch reads QVIHH.

This sequence belongs to the fatty acid desaturase type 1 family. It depends on Fe(2+) as a cofactor.

It localises to the membrane. The catalysed reaction is an (8Z,11Z,14Z)-icosatrienoyl-containing glycerolipid + 2 Fe(II)-[cytochrome b5] + O2 + 2 H(+) = (5Z,8Z,11Z,14Z)-eicosatetraenoyl-containing glycerolipid + 2 Fe(III)-[cytochrome b5] + 2 H2O. It carries out the reaction an (8Z,11Z,14Z,17Z)-eicosatetraenoyl-containing glycerolipid + 2 Fe(II)-[cytochrome b5] + O2 + 2 H(+) = a (5Z,8Z,11Z,14Z,17Z)-eicosapentaenoyl-containing glycerolipid + 2 Fe(III)-[cytochrome b5] + 2 H2O. In terms of biological role, fatty acid desaturase that introduces a cis double bond at the 5-position in 18-carbon polyunsaturated fatty acids. The protein is Acyl-lipid (8-3)-desaturase B (fadB) of Dictyostelium discoideum (Social amoeba).